A 159-amino-acid chain; its full sequence is Ribosome maturation factor RimP (159 aa).

It belongs to the RimP family.

Its subcellular location is the cytoplasm. Its function is as follows. Required for maturation of 30S ribosomal subunits. This is Ribosome maturation factor RimP from Geotalea daltonii (strain DSM 22248 / JCM 15807 / FRC-32) (Geobacter daltonii).